A 173-amino-acid polypeptide reads, in one-letter code: Co-chaperone protein HscB homolog (173 aa).

A J domain is found at 5–77 (CHFAQFDLQP…PRRALYLLTL (73 aa)).

The protein belongs to the HscB family. As to quaternary structure, interacts with HscA and stimulates its ATPase activity.

Its function is as follows. Co-chaperone involved in the maturation of iron-sulfur cluster-containing proteins. Seems to help targeting proteins to be folded toward HscA. The protein is Co-chaperone protein HscB homolog of Pseudomonas paraeruginosa (strain DSM 24068 / PA7) (Pseudomonas aeruginosa (strain PA7)).